A 413-amino-acid polypeptide reads, in one-letter code: Ras association domain-containing protein 5 (413 aa).

Positions 1–103 are disordered; it reads MASPAIGQRP…RPRDVRSIFE (103 aa). Positions 52 to 74 are enriched in basic and acidic residues; that stretch reads SEDRGGRRSGRRDPEPTPRDCRH. The segment at 117–165 adopts a Phorbol-ester/DAG-type zinc-finger fold; it reads GHRFVELALRGGPGWCDLCGREVLRQALRCANCKFTCHSECRSLIQLDC. 2 positions are modified to phosphoserine: Ser-177 and Ser-274. Positions 265-359 constitute a Ras-associating domain; that stretch reads PAATTDKRTS…LSFVLKENET (95 aa). A Phosphothreonine modification is found at Thr-347. One can recognise an SARAH domain in the interval 361–408; the sequence is EVEWDAFSIPELQNFLTILEKEEQDKIHQLQKKYNKFRQKLEEALRES.

Interacts directly with activated HRAS; a RASSF5-STK4/MST1 complex probably associates with activated HRAS. Interacts with KRAS. Probably interacts with Ras-like GTPases RRAS, MRAS, RAP1B, RAP2A and RALA. Interacts with RRAS2. Can self-associate. Interacts with RSSF1 isoform A. The RSSF1 isoform A-RSSF5 heterodimer probably mediates the association of RSSF1 with HRAS. Isoform 2 interacts with activated RAP1A and ITGAL/LFA-1. Binds STK4/MST1, inhibiting STK4/MST1 autoactivation.

The protein resides in the cytoplasm. It localises to the cytoskeleton. Potential tumor suppressor. Seems to be involved in lymphocyte adhesion by linking RAP1A activation upon T-cell receptor or chemokine stimulation to integrin activation. Isoform 2 stimulates lymphocyte polarization and the patch-like distribution of ITGAL/LFA-1, resulting in an enhanced adhesion to ICAM1. Together with RAP1A may participate in regulation of microtubule growth. The association of isoform 2 with activated RAP1A is required for directional movement of endothelial cells during wound healing. May be involved in regulation of Ras apoptotic function. The RASSF5-STK4/MST1 complex may mediate HRAS and KRAS induced apoptosis. The chain is Ras association domain-containing protein 5 (Rassf5) from Mus musculus (Mouse).